Here is a 941-residue protein sequence, read N- to C-terminus: Isoleucine--tRNA ligase (941 aa).

A 'HIGH' region motif is present at residues P69–H79. E589 lines the L-isoleucyl-5'-AMP pocket. Positions K630 to S634 match the 'KMSKS' region motif. K633 is an ATP binding site. Zn(2+) contacts are provided by C915, C918, C932, and C935.

The protein belongs to the class-I aminoacyl-tRNA synthetase family. IleS type 1 subfamily. In terms of assembly, monomer. Requires Zn(2+) as cofactor.

It localises to the cytoplasm. The catalysed reaction is tRNA(Ile) + L-isoleucine + ATP = L-isoleucyl-tRNA(Ile) + AMP + diphosphate. Functionally, catalyzes the attachment of isoleucine to tRNA(Ile). As IleRS can inadvertently accommodate and process structurally similar amino acids such as valine, to avoid such errors it has two additional distinct tRNA(Ile)-dependent editing activities. One activity is designated as 'pretransfer' editing and involves the hydrolysis of activated Val-AMP. The other activity is designated 'posttransfer' editing and involves deacylation of mischarged Val-tRNA(Ile). The polypeptide is Isoleucine--tRNA ligase (Zymomonas mobilis subsp. mobilis (strain ATCC 31821 / ZM4 / CP4)).